The primary structure comprises 346 residues: Fe(3+) ions import ATP-binding protein FbpC 2 (346 aa).

Residues 5–235 enclose the ABC transporter domain; the sequence is LEVDGVDKSF…PVDVPTAEFI (231 aa). 37–44 is an ATP binding site; that stretch reads GPSGCGKT.

The protein belongs to the ABC transporter superfamily. Fe(3+) ion importer (TC 3.A.1.10) family. The complex is composed of two ATP-binding proteins (FbpC), two transmembrane proteins (FbpB) and a solute-binding protein (FbpA).

The protein resides in the cell membrane. It catalyses the reaction Fe(3+)(out) + ATP + H2O = Fe(3+)(in) + ADP + phosphate + H(+). Functionally, part of the ABC transporter complex FbpABC involved in Fe(3+) ions import. Responsible for energy coupling to the transport system. The protein is Fe(3+) ions import ATP-binding protein FbpC 2 of Rhodococcus jostii (strain RHA1).